A 443-amino-acid chain; its full sequence is Intermediate filament protein ifd-2 (443 aa).

Residues 1-58 (MTDPLNPTRLQNHPALARIIESGRTNLPTGITTSGALSAYAQNAAAIIRDNREREKVE) form a head region. The IF rod domain occupies 55-405 (EKVEIADLNN…KLMENAEHLR (351 aa)). Positions 59–90 (IADLNNRLARYVEKVRFLEAQNRVLENDIGVF) are coil 1A. The segment at 91-104 (RNAAHTHSERIAVY) is linker 1. The interval 105–239 (FESEKASLFT…SQHDIAIREE (135 aa)) is coil 1B. The interval 240-257 (ISKARRDTTNKNRDYFHN) is linker 12. Positions 258–403 (ELHAAMKEIR…YRKLMENAEH (146 aa)) are coil 2. Residues 404-443 (LRTTVQTHVTYNAPPPPLPQSGPRTTSYHAYGSAYNDSLL) are tail.

This sequence belongs to the intermediate filament family.

It is found in the cytoplasm. In terms of biological role, cytoplasmic intermediate filaments provide mechanical strength to cells. Not essential protein. This chain is Intermediate filament protein ifd-2 (ifd-2), found in Caenorhabditis elegans.